The chain runs to 277 residues: Caspase-3 (277 aa).

Position 1 is an N-acetylmethionine (methionine 1). 2 consecutive propeptides follow at residues 1-9 (MENTENSVD) and 10-28 (SKSI…KSVD). A compositionally biased stretch (polar residues) spans 1–10 (MENTENSVDS). The disordered stretch occupies residues 1–25 (MENTENSVDSKSIKNSEPKIIHGSK). Position 11 is an N6-acetyllysine (lysine 11). Over residues 11-20 (KSIKNSEPKI) the composition is skewed to basic and acidic residues. Serine 26 bears the Phosphoserine mark. Active-site residues include histidine 121 and cysteine 163. At cysteine 163 the chain carries S-nitrosocysteine; in inhibited form.

It belongs to the peptidase C14A family. In terms of assembly, heterotetramer that consists of two anti-parallel arranged heterodimers, each one formed by a 17 kDa (p17) and a 12 kDa (p12) subunit. Interacts with BIRC6/bruce. Post-translationally, cleavage by granzyme B, caspase-6, caspase-8 and caspase-10 generates the two active subunits. Additional processing of the propeptides is likely due to the autocatalytic activity of the activated protease. Active heterodimers between the small subunit of caspase-7 protease and the large subunit of caspase-3 also occur and vice versa. S-nitrosylated on its catalytic site cysteine in unstimulated cell lines and denitrosylated upon activation of the Fas apoptotic pathway, associated with an increase in intracellular caspase activity. Fas therefore activates caspase-3 not only by inducing the cleavage of the caspase zymogen to its active subunits, but also by stimulating the denitrosylation of its active site thiol. In terms of processing, ubiquitinated by BIRC6; this activity is inhibited by DIABLO/SMAC.

Its subcellular location is the cytoplasm. It carries out the reaction Strict requirement for an Asp residue at positions P1 and P4. It has a preferred cleavage sequence of Asp-Xaa-Xaa-Asp-|- with a hydrophobic amino-acid residue at P2 and a hydrophilic amino-acid residue at P3, although Val or Ala are also accepted at this position.. Its activity is regulated as follows. Inhibited by BIRC6; following inhibition of BIRC6-caspase binding by DIABLO/SMAC, BIRC6 is subjected to caspase cleavage, leading to an increase in active caspases. Functionally, involved in the activation cascade of caspases responsible for apoptosis execution. At the onset of apoptosis, it proteolytically cleaves poly(ADP-ribose) polymerase PARP1 at a '216-Asp-|-Gly-217' bond. Cleaves and activates sterol regulatory element binding proteins (SREBPs) between the basic helix-loop-helix leucine zipper domain and the membrane attachment domain. Cleaves and activates caspase-6, -7 and -9 (CASP6, CASP7 and CASP9, respectively). Cleaves and inactivates interleukin-18 (IL18). Triggers cell adhesion in sympathetic neurons through RET cleavage. Cleaves IL-1 beta between an Asp and an Ala, releasing the mature cytokine which is involved in a variety of inflammatory processes. Cleaves and inhibits serine/threonine-protein kinase AKT1 in response to oxidative stress. Acts as an inhibitor of type I interferon production during virus-induced apoptosis by mediating cleavage of antiviral proteins CGAS, IRF3 and MAVS, thereby preventing cytokine overproduction. Also involved in pyroptosis by mediating cleavage and activation of gasdermin-E (GSDME). Cleaves XRCC4 and phospholipid scramblase proteins XKR4, XKR8 and XKR9, leading to promote phosphatidylserine exposure on apoptotic cell surface. Cleaves BIRC6 following inhibition of BIRC6-caspase binding by DIABLO/SMAC. The sequence is that of Caspase-3 (CASP3) from Saimiri boliviensis boliviensis (Bolivian squirrel monkey).